Here is a 195-residue protein sequence, read N- to C-terminus: Imidazoleglycerol-phosphate dehydratase (195 aa).

Belongs to the imidazoleglycerol-phosphate dehydratase family.

Its subcellular location is the cytoplasm. It catalyses the reaction D-erythro-1-(imidazol-4-yl)glycerol 3-phosphate = 3-(imidazol-4-yl)-2-oxopropyl phosphate + H2O. The protein operates within amino-acid biosynthesis; L-histidine biosynthesis; L-histidine from 5-phospho-alpha-D-ribose 1-diphosphate: step 6/9. This Haloarcula marismortui (strain ATCC 43049 / DSM 3752 / JCM 8966 / VKM B-1809) (Halobacterium marismortui) protein is Imidazoleglycerol-phosphate dehydratase.